The following is a 3258-amino-acid chain: Protein unc-80 homolog (3258 aa).

A disordered region spans residues 152 to 173; it reads VENQGSPGQPCQSSSNDEEENN. Residues 155 to 166 show a composition bias toward low complexity; that stretch reads QGSPGQPCQSSS. Serine 257 is subject to Phosphoserine. Disordered stretches follow at residues 291–316, 449–468, 522–560, 697–717, 732–784, 963–1019, 1034–1076, 1404–1447, and 1817–1836; these read RGNS…RASL, RKED…GKRR, RRGS…HGEN, KKSE…GAFQ, PAVS…TPVS, PGKK…EQMQ, KSQS…ISLR, EDSK…MSNA, and AVSA…HHVP. A compositionally biased stretch (polar residues) spans 295 to 307; it reads FDGSLSSQTSQER. Serine 525 is subject to Phosphoserine. Over residues 698-712 the composition is skewed to basic and acidic residues; it reads KSENKENETLEKRPS. Residues 732–767 show a composition bias toward gly residues; it reads PAVSGAGDGGGEEGGGGDGGGGGGDGGGGGGGGGGP. 2 stretches are compositionally biased toward basic and acidic residues: residues 769–780 and 965–974; these read EKNDKNQEKDES and KKVEENEQES. Low complexity predominate over residues 1035 to 1052; it reads SQSAASDTSSQSEQDTSE. Over residues 1066–1076 the composition is skewed to basic residues; the sequence is ARSRSRRISLR. The span at 1417 to 1429 shows a compositional bias: basic and acidic residues; it reads LKSDAGVEEKKEG. Transmembrane regions (helical) follow at residues 2268–2288, 2398–2418, 2785–2805, and 2831–2851; these read PFVL…DAAN, IAAT…VEVL, GLAE…LVCF, and LALW…FVLL. Residues 2942–2964 show a composition bias toward polar residues; it reads NTGTGTVWEQDSEPSQQASQDTL. The disordered stretch occupies residues 2942–2982; the sequence is NTGTGTVWEQDSEPSQQASQDTLSRTDEEDEENDSISMPSV. Phosphoserine is present on serine 3042. The disordered stretch occupies residues 3051–3213; sequence NLLVQQPLGR…DDFTGLETSS (163 aa). The span at 3059–3068 shows a compositional bias: basic residues; it reads GRKRGLRQLR. Positions 3088-3100 are enriched in polar residues; it reads RLSTTRRSIQPKT. The span at 3117–3129 shows a compositional bias: low complexity; sequence PEPAAAPTDALPA. The segment covering 3175–3186 has biased composition (acidic residues); it reads PTEEGEKEEDTE.

Belongs to the unc-80 family. NALCN complex consists of NALCN and auxiliary subunits, UNC79, UNC80 and NACL1. These auxiliary subunits are essential for the NALCN complex function. Interacts (via N-terminus half) with NALCN; this interaction facilitates NALCN surface localization. Interacts with UNC79. UNC80 bridges NALCN to UNC79. Phosphorylated on tyrosine residues. Moderately expressed in fetal brain, spinal cord, skeletal muscle, thymus, spleen, fetal liver, small intestine, colon, kidney and uterus. Highly expressed in adrenal gland, prostate and testis, as well as in brain and cerebellum.

The protein localises to the cell membrane. Auxiliary subunit of the NALCN sodium channel complex, a voltage-gated ion channel responsible for the resting Na(+) permeability that controls neuronal excitability. Activated by neuropeptides substance P, neurotensin, and extracellular Ca(2+) that regulates neuronal excitability by controlling the sizes of NALCN-dependent sodium-leak current. UNC80 is essential for NALCN sensitivity to extracellular Ca(2+). The chain is Protein unc-80 homolog from Homo sapiens (Human).